Consider the following 343-residue polypeptide: E3 ubiquitin-protein ligase RNF113A (343 aa).

Residue Ala2 is modified to N-acetylalanine. Positions 2 to 60 (AEQLSPGKTTDQVCTFLFKKPGRKVAAGRRKRPICNQESGDSSSSSDEGNTVVRPEKKR) are important for interaction with SNRNP200/BRR2. Phosphoserine is present on Ser6. Residues 23-34 (GRKVAAGRRKRP) show a composition bias toward basic residues. The disordered stretch occupies residues 23–95 (GRKVAAGRRK…EEEEENKSES (73 aa)). The segment covering 39 to 50 (ESGDSSSSSDEG) has biased composition (low complexity). The interval 50 to 61 (GNTVVRPEKKRA) is important for interaction with CXCR4. A phosphoserine mark is found at Ser84 and Ser85. The segment at 196–224 (DYQPDICKDYKETGFCGFGDSCKFLHDRS) adopts a C3H1-type zinc-finger fold. The residue at position 253 (Ser253) is a Phosphoserine. Residues 262–300 (CFICRQTFQNPVVTKCRHYFCESCALQHFRTTPRCYVCD) form an RING-type zinc finger. Residues 323-343 (AEGGGASGFPEDPDEDPVPIT) are disordered. Residues 333–343 (EDPDEDPVPIT) show a composition bias toward acidic residues.

Component of pre-catalytic and catalytic spliceosome complexes. Interacts (via N-terminus) with the spliceosome subunit SNRNP200/BRR2. Component of the minor spliceosome. Within this complex, interacts with SCNM1 and CRIPT.

It localises to the nucleus. It is found in the nucleus speckle. The catalysed reaction is S-ubiquitinyl-[E2 ubiquitin-conjugating enzyme]-L-cysteine + [acceptor protein]-L-lysine = [E2 ubiquitin-conjugating enzyme]-L-cysteine + N(6)-ubiquitinyl-[acceptor protein]-L-lysine.. It functions in the pathway protein modification; protein ubiquitination. Functionally, required for pre-mRNA splicing as component of the spliceosome. As a component of the minor spliceosome, involved in the splicing of U12-type introns in pre-mRNAs. E3 ubiquitin-protein ligase that catalyzes the transfer of ubiquitin onto target proteins. Catalyzes polyubiquitination of SNRNP200/BRR2 with non-canonical 'Lys-63'-linked polyubiquitin chains. Plays a role in DNA repair via its role in the synthesis of 'Lys-63'-linked polyubiquitin chains that recruit ALKBH3 and the ASCC complex to sites of DNA damage by alkylating agents. Ubiquitinates CXCR4, leading to its degradation, and thereby contributes to the termination of CXCR4 signaling. The polypeptide is E3 ubiquitin-protein ligase RNF113A (RNF113A) (Bos taurus (Bovine)).